Here is a 340-residue protein sequence, read N- to C-terminus: Phosphatidylglycerol--prolipoprotein diacylglyceryl transferase (340 aa).

Helical transmembrane passes span 19–39 (IPLR…VWLG), 54–74 (ADIA…YHVI), 93–113 (IWEG…GAWI), and 119–139 (GIPL…AQAF). Arginine 141 contributes to the a 1,2-diacyl-sn-glycero-3-phospho-(1'-sn-glycerol) binding site. The next 3 membrane-spanning stretches (helical) occupy residues 176–196 (HPTF…VIWA), 202–221 (LGHG…GRAW), and 238–258 (LNDW…VLSS). Residues 266-340 (EIVEPGASDT…ESAAESAKKV (75 aa)) are disordered. Over residues 284 to 294 (DLGKDEDKATT) the composition is skewed to basic and acidic residues. Over residues 295–307 (DKATATDTSTTTD) the composition is skewed to low complexity. Residues 326–340 (PSEKTESAAESAKKV) are compositionally biased toward basic and acidic residues.

It belongs to the Lgt family.

The protein resides in the cell membrane. The enzyme catalyses L-cysteinyl-[prolipoprotein] + a 1,2-diacyl-sn-glycero-3-phospho-(1'-sn-glycerol) = an S-1,2-diacyl-sn-glyceryl-L-cysteinyl-[prolipoprotein] + sn-glycerol 1-phosphate + H(+). Its pathway is protein modification; lipoprotein biosynthesis (diacylglyceryl transfer). Its function is as follows. Catalyzes the transfer of the diacylglyceryl group from phosphatidylglycerol to the sulfhydryl group of the N-terminal cysteine of a prolipoprotein, the first step in the formation of mature lipoproteins. In Streptomyces avermitilis (strain ATCC 31267 / DSM 46492 / JCM 5070 / NBRC 14893 / NCIMB 12804 / NRRL 8165 / MA-4680), this protein is Phosphatidylglycerol--prolipoprotein diacylglyceryl transferase.